The chain runs to 551 residues: Cytochrome P450 monooxygenase virE (551 aa).

The N-terminal stretch at 1-25 (MPKPWVVFGLGTLVLFLWRLNKIGR) is a signal peptide. N392 carries N-linked (GlcNAc...) asparagine glycosylation. A heme-binding site is contributed by C439.

The protein belongs to the cytochrome P450 family. The cofactor is heme.

It functions in the pathway secondary metabolite biosynthesis. Its function is as follows. Cytochrome P450 monooxygenase; part of the gene cluster that mediates the biosynthesis of virensols and trichoxide, fungal natural products that contain or are derived from a salicylaldehyde core. The pathway begins with the synthesis of the reduced chain in virensol C by the highly reducing polyketide synthase virA via condensation of one acetate and 8 malonate units. VirA has interesting programming rules since the first 2 ketides are fully reduced, the 3 following ketides undergo beta-dehydration, and the last 3 ketides are only reduced to beta-hydroxys to yield the trihydroxy portion. The production of aldehyde virensol C by virA alone is surprising, since virA does not contain a reductase (R) domain that is typically associated with reductive product release in HRPKS. The cupin-domain enzyme virC is involved in enhancing virA product turnover. The short-chain dehydrogenase virB then oxidizes the C-7 alcohol of virensol C to a ketone, yielding virensol D. Virensol D is further transformed to salicylaldehyde 5-deoxyaurocitrin by the short-chain dehydrogenase virD. VirD catalyzes the dehydrogenation of C-3 to form the beta-ketone aldehyde, which is followed by the generation of the nucleophilic C-2 that is required for the intramolecular aldol condensation between C-2 and C-7, itself followed by dehydration and aromatization which leads to salicylaldehyde 5-deoxyaurocitrin. While the dehydrogenation of virensol D is definitely catalyzed by virD, the aldol condensation and dehydration may be uncatalyzed or assisted by virD. The short chain dehydrogenase virG then converts salicylaldehyde 5-deoxyaurocitrin into virensol B which is further hydroxylated by the cytochrome P450 monooxygenase virE to yield the hydroquinone virensol A. VirI then may oxidize virensol A to form the quinone, while virH performs the epoxidation. Finally, the two remaining short-chain dehydrogenases, virK and virL, are probably responsible for reducing the ketones to the corresponding alcohols to furnish the epoxycyclohexanol structure in trichoxide. The chain is Cytochrome P450 monooxygenase virE from Hypocrea virens (strain Gv29-8 / FGSC 10586) (Gliocladium virens).